The following is a 197-amino-acid chain: Imidazoleglycerol-phosphate dehydratase (197 aa).

This sequence belongs to the imidazoleglycerol-phosphate dehydratase family.

It localises to the cytoplasm. It carries out the reaction D-erythro-1-(imidazol-4-yl)glycerol 3-phosphate = 3-(imidazol-4-yl)-2-oxopropyl phosphate + H2O. It functions in the pathway amino-acid biosynthesis; L-histidine biosynthesis; L-histidine from 5-phospho-alpha-D-ribose 1-diphosphate: step 6/9. The protein is Imidazoleglycerol-phosphate dehydratase of Pseudomonas putida (strain GB-1).